Here is a 329-residue protein sequence, read N- to C-terminus: MTRTGDAVTILPQPDFTATFPGPFPTSPHGERTERQLLGWLEEYPLLPSARARSVLVNITSHGVSRTLPTADADDLVLFAELLLWLTAFDDMHGESNAARDLVALVDRTAELTLVLAGGSPPPLTNPFPAALYDLLARFRARTGPAAYLRLAASLRDTIMALVWEAHHVAEPERVALETYLEMRPHTVFVRTIFAAAEIVLDYELTDAQRALAPVRHLETAVANLAGWINDLASYEREAARGPAQPLSLPTLLRARHGGSLEEAFARAGGMCENEAAVARQGITSLAGDPPSALTAHARALEDIARSFVWHTSHARYQGPKRGAAPTSR.

Mg(2+) is bound by residues Asp90 and Glu95. The DDXXXE motif motif lies at Asp90–Glu95. Arg184 contacts substrate. Asn230 and Ser234 together coordinate Mg(2+). The NXXXSXXXE motif motif lies at Asn230 to Glu238. Arg237 contacts substrate. Glu238 serves as a coordination point for Mg(2+). Arg316–Tyr317 lines the substrate pocket.

It belongs to the terpene synthase family. Mg(2+) is required as a cofactor.

It catalyses the reaction (+)-copalyl diphosphate = (12E)-labda-8(17),12,14-triene + diphosphate. Functionally, involved in the biosynthesis of the mercapturic acid derivative diterpene cyslabdan A, a potentiator of the beta-lactam antibiotic imipenem. Catalyzes the conversion of (+)-copalyl diphosphate to yield labda-8(17),12(E),14-triene (biformene). This Streptomyces cyslabdanicus protein is (12E)-labda-8(17),12,14-triene synthase.